A 458-amino-acid chain; its full sequence is MSTKMTPPVEKNEFIDVVFEDLTHDGAGVAKVKGYPIFVKNGLPGEEAQIKIIKVKKNFAFGRLMKLHTESPYRKDAECPVYNQCGGCQLQHLTYEGQLQAKEKQVRDVMQRIGGLADVPVHPVLGMKNPWVYRNKAQVPIGEREGGLVAGFYRQGTHDIINMESCLIQAEENDTLIQEVKRICEKHGITAYNEERNKGTLRHVMARYGQVTGEIMLVFITRTAELPNKKAIIEEIAAKFPEVKSIVQNVNTKRTNVIFGDKTTVLYGSEYIYDFIGDIKFAISARSFYQVNPEQTKVLYDKTLEYAKLNGNETVIDAYCGIGSISLFLAQKAKKVYGVEIVPEAIEDANRNAALNNMTNAEFGVGEAEVVIPKWYKEGVIADTMVVDPPRKGCDEALLNTIIDMKPNRVVYVSCNPATLARDLKVLEEGGYKTQEVQPVDMFPHTTHVECVAWLKLV.

A TRAM domain is found at 8–66; sequence PVEKNEFIDVVFEDLTHDGAGVAKVKGYPIFVKNGLPGEEAQIKIIKVKKNFAFGRLMK. C79, C85, C88, and C166 together coordinate [4Fe-4S] cluster. Q290, Y319, E340, and D388 together coordinate S-adenosyl-L-methionine. Catalysis depends on C415, which acts as the Nucleophile.

The protein belongs to the class I-like SAM-binding methyltransferase superfamily. RNA M5U methyltransferase family.

This is an uncharacterized protein from Bacillus cereus (strain ATCC 14579 / DSM 31 / CCUG 7414 / JCM 2152 / NBRC 15305 / NCIMB 9373 / NCTC 2599 / NRRL B-3711).